A 487-amino-acid chain; its full sequence is GTPase Der (487 aa).

EngA-type G domains follow at residues 3-166 (PVIA…PRDA) and 193-366 (IKIA…QSAV). GTP contacts are provided by residues 9 to 16 (GRPNVGKS), 56 to 60 (DTGGI), 118 to 121 (NKID), 199 to 206 (GRPNVGKS), 246 to 250 (DTAGV), and 311 to 314 (NKWD). The KH-like domain occupies 367–451 (TRWPTSRLTQ…PIRIEYKGGE (85 aa)). Positions 448–461 (KGGENPYEGKKNTL) are enriched in basic and acidic residues. Residues 448-487 (KGGENPYEGKKNTLTDRQVNKKRRLMSHHKKAEKKRRDKR) form a disordered region. The segment covering 467–487 (NKKRRLMSHHKKAEKKRRDKR) has biased composition (basic residues).

The protein belongs to the TRAFAC class TrmE-Era-EngA-EngB-Septin-like GTPase superfamily. EngA (Der) GTPase family. Associates with the 50S ribosomal subunit.

GTPase that plays an essential role in the late steps of ribosome biogenesis. This Pseudomonas putida (strain ATCC 700007 / DSM 6899 / JCM 31910 / BCRC 17059 / LMG 24140 / F1) protein is GTPase Der.